A 692-amino-acid chain; its full sequence is Elongation factor G (692 aa).

Residues 8 to 282 form the tr-type G domain; the sequence is ENTRNIGIMA…AVIDYLPSPL (275 aa). Residues 17–24, 81–85, and 135–138 contribute to the GTP site; these read AHIDAGKT, DTPGH, and NKMD.

Belongs to the TRAFAC class translation factor GTPase superfamily. Classic translation factor GTPase family. EF-G/EF-2 subfamily.

Its subcellular location is the cytoplasm. Catalyzes the GTP-dependent ribosomal translocation step during translation elongation. During this step, the ribosome changes from the pre-translocational (PRE) to the post-translocational (POST) state as the newly formed A-site-bound peptidyl-tRNA and P-site-bound deacylated tRNA move to the P and E sites, respectively. Catalyzes the coordinated movement of the two tRNA molecules, the mRNA and conformational changes in the ribosome. This is Elongation factor G from Bacillus mycoides (strain KBAB4) (Bacillus weihenstephanensis).